The following is a 344-amino-acid chain: Phenylalanine--tRNA ligase alpha subunit (344 aa).

Position 256 (Glu-256) interacts with Mg(2+).

This sequence belongs to the class-II aminoacyl-tRNA synthetase family. Phe-tRNA synthetase alpha subunit type 1 subfamily. Tetramer of two alpha and two beta subunits. It depends on Mg(2+) as a cofactor.

Its subcellular location is the cytoplasm. The enzyme catalyses tRNA(Phe) + L-phenylalanine + ATP = L-phenylalanyl-tRNA(Phe) + AMP + diphosphate + H(+). The polypeptide is Phenylalanine--tRNA ligase alpha subunit (Geobacillus thermodenitrificans (strain NG80-2)).